Consider the following 224-residue polypeptide: Protein GrpE (224 aa).

The segment at asparagine 27–glutamate 77 is disordered. The span at glutamate 31–serine 62 shows a compositional bias: acidic residues.

This sequence belongs to the GrpE family. As to quaternary structure, homodimer.

It localises to the cytoplasm. Its function is as follows. Participates actively in the response to hyperosmotic and heat shock by preventing the aggregation of stress-denatured proteins, in association with DnaK and GrpE. It is the nucleotide exchange factor for DnaK and may function as a thermosensor. Unfolded proteins bind initially to DnaJ; upon interaction with the DnaJ-bound protein, DnaK hydrolyzes its bound ATP, resulting in the formation of a stable complex. GrpE releases ADP from DnaK; ATP binding to DnaK triggers the release of the substrate protein, thus completing the reaction cycle. Several rounds of ATP-dependent interactions between DnaJ, DnaK and GrpE are required for fully efficient folding. The protein is Protein GrpE of Lachnoclostridium phytofermentans (strain ATCC 700394 / DSM 18823 / ISDg) (Clostridium phytofermentans).